The primary structure comprises 255 residues: Pimeloyl-[acyl-carrier protein] methyl ester esterase (255 aa).

In terms of domain architecture, AB hydrolase-1 spans 16–242; it reads LVLLHGWGLN…AAHAPFISHP (227 aa). Residues Trp-22, 82-83, and 143-147 contribute to the substrate site; these read SL and FLALQ. The active-site Nucleophile is Ser-82. Catalysis depends on residues Asp-207 and His-235. His-235 contributes to the substrate binding site.

This sequence belongs to the AB hydrolase superfamily. Carboxylesterase BioH family. In terms of assembly, monomer.

The protein localises to the cytoplasm. The enzyme catalyses 6-carboxyhexanoyl-[ACP] methyl ester + H2O = 6-carboxyhexanoyl-[ACP] + methanol + H(+). The protein operates within cofactor biosynthesis; biotin biosynthesis. The physiological role of BioH is to remove the methyl group introduced by BioC when the pimeloyl moiety is complete. It allows to synthesize pimeloyl-ACP via the fatty acid synthetic pathway through the hydrolysis of the ester bonds of pimeloyl-ACP esters. The chain is Pimeloyl-[acyl-carrier protein] methyl ester esterase from Pectobacterium atrosepticum (strain SCRI 1043 / ATCC BAA-672) (Erwinia carotovora subsp. atroseptica).